Here is a 503-residue protein sequence, read N- to C-terminus: MTIYNINLGIGWASSGVEYAQAYRAGVFRKLNLSSKFIFTDMILADNIQHLTANIGFDDNQVIWLYNHFTDIKIAPTSVTVDDVLAYFGGEESHREKNGKVLRVFFFDQDKFVTCYLVDENKDLVQHAEYVFKGNLIRKDYFSYTRYCSEYFAPKDNVAVLYQRTFYNEDGTPVYDILMNQGKEEVYHFKDKIFYGKQAFVRAFMKSLNLNKSDLVILDRETGIGQVVFEEAQTAHLAVVVHAEHYSENATNEDYILWNNYYDYQFTNADKVDFFIVSTDRQNEVLQEQFAKYTQHQPKIVTIPVGSIDSLTDSSQGRKPFSLITASRLAKEKHIDWLVKAVIEAHKELPELTFDIYGSGGEDSLLREIIANHQAEDYIQLKGHAELSQIYSQYEVYLTASTSEGFGLTLMEAIGSGLPLIGFDVPYGNQTFIEDGQNGYLIPSSSDHVEDQIKQAYAAKICQLYQENRLEAMRAYSYQIAEGFLTKEILEKWKKTVEEVLHD.

Positions M1–S78 are N-terminus R-fold-1. G16–Y19 contacts UDP. The segment at V79 to Y195 is extended beta-sheet domain. A C-terminus R-fold-1 region spans residues G196–G306. H242 is a binding site for N-acetyl-D-glucosamine. The interval S307–D503 is R-fold-2. R328 serves as a coordination point for UDP. An N-acetyl-D-glucosamine-binding site is contributed by E332. Residues K333, G358, and H384–A385 contribute to the UDP site. E404–G407 is an N-acetyl-D-glucosamine binding site. L408–E412 lines the UDP pocket.

This sequence belongs to the glycosyltransferase group 1 family. Glycosyltransferase 4 subfamily. As to quaternary structure, monomer. Interacts with stabilizing protein GtfB, probably as a heterotetramer with 2 subunits each of GtfA and GtfB, part of the accessory SecA2/SecY2 protein translocation apparatus.

It localises to the cytoplasm. The protein resides in the cell membrane. It catalyses the reaction L-seryl-[protein] + UDP-N-acetyl-alpha-D-glucosamine = 3-O-[N-acetyl-alpha-D-glucosaminyl]-L-seryl-[protein] + UDP + H(+). It participates in protein modification; protein glycosylation. Functionally, required for the polymorphic O-glycosylation of serine-rich repeat protein PsrP. Catalyzes the first step in glycosylation by transferring N-acetylglucosamine from UDP-GlcNAc to serine residues in PsrP. Part of the accessory SecA2/SecY2 system specifically required to export serine-rich repeat cell wall proteins encoded upstream in the same operon. The GtfA-GtfB complex adds GlcNAc from UDP-GlcNAc to PsrP (experimentally characterized with truncated PsrP-SSR1 constructs); this subunit alone has weak N-acetylglucosaminyl transferase activity that is 10-fold stimulated by GtfB. The complex requires at least a 25 residue-long peptide for activity; the in vitro assay has only been seen to glycosylate Ser residues. The alpha linkage was shown in L.reuteri. The polypeptide is UDP-N-acetylglucosamine--peptide N-acetylglucosaminyltransferase GtfA subunit (Streptococcus pneumoniae serotype 4 (strain ATCC BAA-334 / TIGR4)).